Consider the following 70-residue polypeptide: Brevinin-1CG3 (70 aa).

A signal peptide spans methionine 1–cysteine 22. The propeptide at glutamate 23–glutamate 44 is removed in mature form. A disulfide bridge connects residues cysteine 64 and cysteine 70.

It belongs to the frog skin active peptide (FSAP) family. Brevinin subfamily. Expressed by the skin glands.

It is found in the secreted. Functionally, antimicrobial peptide active against a variety of Gram-positive and some Gram-negative bacterial strains. Has antifungal activity against a slime mold isolate. Has hemolytic activity against human erythrocytes. This is Brevinin-1CG3 from Amolops chunganensis (Chungan torrent frog).